Consider the following 546-residue polypeptide: Chaperonin GroEL 2 (546 aa).

ATP-binding positions include 30–33 (TLGP), Lys51, 87–91 (DGTTT), Gly415, and Asp495. A disordered region spans residues 527-546 (DAAPATAPGGPGAGGPGFDF). Residues 535-546 (GGPGAGGPGFDF) are compositionally biased toward gly residues.

This sequence belongs to the chaperonin (HSP60) family. Forms a cylinder of 14 subunits composed of two heptameric rings stacked back-to-back. Interacts with the co-chaperonin GroES.

Its subcellular location is the cytoplasm. The enzyme catalyses ATP + H2O + a folded polypeptide = ADP + phosphate + an unfolded polypeptide.. Its function is as follows. Together with its co-chaperonin GroES, plays an essential role in assisting protein folding. The GroEL-GroES system forms a nano-cage that allows encapsulation of the non-native substrate proteins and provides a physical environment optimized to promote and accelerate protein folding. In Burkholderia ambifaria (strain ATCC BAA-244 / DSM 16087 / CCUG 44356 / LMG 19182 / AMMD) (Burkholderia cepacia (strain AMMD)), this protein is Chaperonin GroEL 2.